The chain runs to 348 residues: Propane 2-monooxygenase, reductase component (348 aa).

The 91-residue stretch at 5-95 folds into the 2Fe-2S ferredoxin-type domain; it reads HKINFDPVDI…DCTIELLNFD (91 aa). [2Fe-2S] cluster-binding residues include cysteine 39, cysteine 44, cysteine 47, and cysteine 79. Residues 105–206 enclose the FAD-binding FR-type domain; sequence IQDVRTQVQA…TGPYGSFTLK (102 aa).

The protein belongs to the bacterial ring-hydroxylating dioxygenase ferredoxin reductase family. The propane 2-monooxygenase multicomponent enzyme system is composed of an electron transfer component and a monooxygenase component interacting with the effector protein MimD. The electron transfer component is composed of a reductase (MimB), and the monooxygenase component is formed by a large subunit (MimA) and a small subunit (MimC). The cofactor is FAD. [2Fe-2S] cluster is required as a cofactor.

In terms of biological role, reductase component of the propane 2-monooxygenase multicomponent enzyme system which is involved in the degradation of propane via the O2-dependent hydroxylation of propane. Reductase catalyzes the transfer of electrons from NADH or NADPH to monooxygenase. The sequence is that of Propane 2-monooxygenase, reductase component from Mycolicibacterium smegmatis (strain ATCC 700084 / mc(2)155) (Mycobacterium smegmatis).